Consider the following 589-residue polypeptide: Protein kinase G11A (589 aa).

A disordered region spans residues 1 to 167; sequence MASKAMPRAP…SACSSISSVT (167 aa). 3 stretches are compositionally biased toward polar residues: residues 15–36, 46–55, and 63–76; these read NLQS…SPSK, AESSKPNSEV, and TQHQ…TGSN. Over residues 91 to 100 the composition is skewed to basic and acidic residues; it reads RLADEEKGVV. Residues 142–165 show a composition bias toward low complexity; sequence SSSRCRPSTSSDVSDESACSSISS. A Protein kinase domain is found at 195-533; the sequence is FKLLKKLGCG…ATEIKQHPFF (339 aa). Residues 201–209 and lysine 224 each bind ATP; that span reads LGCGDIGSV. The active-site Proton acceptor is aspartate 320. Residues 551 to 589 are disordered; the sequence is RPVEIERPPKQPVSTSEPAAAPSDAAQKSSDSYLEFDFF.

It belongs to the protein kinase superfamily. Ser/Thr protein kinase family.

The catalysed reaction is L-seryl-[protein] + ATP = O-phospho-L-seryl-[protein] + ADP + H(+). It catalyses the reaction L-threonyl-[protein] + ATP = O-phospho-L-threonyl-[protein] + ADP + H(+). Its function is as follows. May play a role in the regulation of metabolism and signal transduction processes. The polypeptide is Protein kinase G11A (Oryza sativa subsp. indica (Rice)).